We begin with the raw amino-acid sequence, 489 residues long: Probable transporter MCH1 (489 aa).

A run of 12 helical transmembrane segments spans residues 34–54 (ISLI…FTPV), 68–88 (IIGS…GYLA), 94–114 (VLLS…AATV), 124–144 (LAIS…TALL), 156–175 (LTIS…GSRV), 196–216 (FSFL…VVSI), 262–282 (ISTY…EMYI), 302–324 (VAIH…DFLV), 335–355 (LLSI…STFV), 359–379 (YYII…LYPT), 403–423 (IGST…CGVF), and 463–483 (SLII…ILRI).

Belongs to the major facilitator superfamily.

Its subcellular location is the vacuole membrane. Probable transporter. This Wickerhamomyces anomalus (Yeast) protein is Probable transporter MCH1 (MCH1).